The chain runs to 343 residues: tRNA N6-adenosine threonylcarbamoyltransferase (343 aa).

Fe cation contacts are provided by His-112 and His-116. Substrate-binding positions include 135-139 (LVSGG), Asp-168, Gly-181, and Asn-273. Asp-301 contributes to the Fe cation binding site.

The protein belongs to the KAE1 / TsaD family. Requires Fe(2+) as cofactor.

It localises to the cytoplasm. The catalysed reaction is L-threonylcarbamoyladenylate + adenosine(37) in tRNA = N(6)-L-threonylcarbamoyladenosine(37) in tRNA + AMP + H(+). Its function is as follows. Required for the formation of a threonylcarbamoyl group on adenosine at position 37 (t(6)A37) in tRNAs that read codons beginning with adenine. Is involved in the transfer of the threonylcarbamoyl moiety of threonylcarbamoyl-AMP (TC-AMP) to the N6 group of A37, together with TsaE and TsaB. TsaD likely plays a direct catalytic role in this reaction. This is tRNA N6-adenosine threonylcarbamoyltransferase from Azoarcus sp. (strain BH72).